The sequence spans 473 residues: Photosystem II CP43 reaction center protein (473 aa).

A propeptide spanning residues 1–14 is cleaved from the precursor; it reads MKTLYSLRRFYPVE. Thr-15 carries the post-translational modification N-acetylthreonine. Phosphothreonine is present on Thr-15. Transmembrane regions (helical) follow at residues 69–93, 134–155, 178–200, 255–275, and 291–312; these read LFEV…PHLA, LLGP…KDRN, KALY…RKIT, KPFA…LSYS, and WFNN…ASQA. A [CaMn4O5] cluster-binding site is contributed by Glu-367. The helical transmembrane segment at 447 to 471 threads the bilayer; sequence RARAAAAGFEKGIDRDFEPVLSMTP.

This sequence belongs to the PsbB/PsbC family. PsbC subfamily. In terms of assembly, PSII is composed of 1 copy each of membrane proteins PsbA, PsbB, PsbC, PsbD, PsbE, PsbF, PsbH, PsbI, PsbJ, PsbK, PsbL, PsbM, PsbT, PsbX, PsbY, PsbZ, Psb30/Ycf12, at least 3 peripheral proteins of the oxygen-evolving complex and a large number of cofactors. It forms dimeric complexes. The cofactor is Binds multiple chlorophylls and provides some of the ligands for the Ca-4Mn-5O cluster of the oxygen-evolving complex. It may also provide a ligand for a Cl- that is required for oxygen evolution. PSII binds additional chlorophylls, carotenoids and specific lipids..

The protein localises to the plastid. The protein resides in the chloroplast thylakoid membrane. Its function is as follows. One of the components of the core complex of photosystem II (PSII). It binds chlorophyll and helps catalyze the primary light-induced photochemical processes of PSII. PSII is a light-driven water:plastoquinone oxidoreductase, using light energy to abstract electrons from H(2)O, generating O(2) and a proton gradient subsequently used for ATP formation. This Drimys granadensis protein is Photosystem II CP43 reaction center protein.